Consider the following 497-residue polypeptide: Catalase-2 (497 aa).

Active-site residues include H71 and N144. Y354 provides a ligand contact to heme.

Belongs to the catalase family. Heme is required as a cofactor.

It carries out the reaction 2 H2O2 = O2 + 2 H2O. In terms of biological role, catalase involved in the oxidative stress response serving to protect cells from toxicity. For instance plays a role in defending against oxidative damage induced by excessive copper stress. Not required for maintaining normal lifespan. The protein is Catalase-2 of Caenorhabditis elegans.